The sequence spans 333 residues: Anthranilate phosphoribosyltransferase (333 aa).

5-phospho-alpha-D-ribose 1-diphosphate-binding positions include G81, 84 to 85 (GD), T89, 91 to 94 (NIST), 109 to 117 (KHGNRSVSS), and A121. Anthranilate is bound at residue G81. S93 contributes to the Mg(2+) binding site. N112 serves as a coordination point for anthranilate. R167 provides a ligand contact to anthranilate. The Mg(2+) site is built by D225 and E226.

It belongs to the anthranilate phosphoribosyltransferase family. Homodimer. Mg(2+) serves as cofactor.

It catalyses the reaction N-(5-phospho-beta-D-ribosyl)anthranilate + diphosphate = 5-phospho-alpha-D-ribose 1-diphosphate + anthranilate. It functions in the pathway amino-acid biosynthesis; L-tryptophan biosynthesis; L-tryptophan from chorismate: step 2/5. Functionally, catalyzes the transfer of the phosphoribosyl group of 5-phosphorylribose-1-pyrophosphate (PRPP) to anthranilate to yield N-(5'-phosphoribosyl)-anthranilate (PRA). The sequence is that of Anthranilate phosphoribosyltransferase from Actinobacillus succinogenes (strain ATCC 55618 / DSM 22257 / CCUG 43843 / 130Z).